The primary structure comprises 661 residues: NUAK family SNF1-like kinase 1 (661 aa).

Position 1 is an N-acetylmethionine (Met-1). The segment at 1 to 24 (MEGAAAPVAGDRPDLGLGAPGSPR) is disordered. Ser-22 carries the phosphoserine modification. The Protein kinase domain occupies 55–306 (YELQETLGKG…IEDIANHWWV (252 aa)). ATP is bound by residues 61 to 69 (LGKGTYGKV) and Lys-84. The active-site Proton acceptor is the Asp-178. A Phosphothreonine; by LKB1 modification is found at Thr-211. 2 disordered regions span residues 345–421 (TEAK…EGVV) and 442–570 (LPSS…RPSS). Basic residues predominate over residues 393 to 404 (SSKRPKGILKKR). The short motif at 399-402 (GILK) is the GILK motif element. Ser-455 is subject to Phosphoserine. A compositionally biased stretch (basic residues) spans 518 to 529 (SCRRKGILKHSS). Ser-600 carries the phosphoserine; by PKB/AKT1 modification.

The protein belongs to the protein kinase superfamily. CAMK Ser/Thr protein kinase family. SNF1 subfamily. As to quaternary structure, interacts (via GILK motif) with PPP1CB; the interaction is direct and bridges NUAK1 and PPP1R12A. Interacts with CDKN1A. It depends on Mg(2+) as a cofactor. Post-translationally, ubiquitinated with 'Lys-29'- and 'Lys-33'-linked polyubiquitins which appear to impede LKB1-mediated phosphorylation. Deubiquitinated by USP9X. Phosphorylated at Thr-211 by STK11/LKB1 in complex with STE20-related adapter-alpha (STRADA) pseudo kinase and CAB39. Not dephosphorylated by the myosin PP1 complex when regulating its activity, due to the presence of PPP1R12A, which prevents myosin PP1 from dephosphorylating NUAK1. Phosphorylated by STK38L upon stimulation with IGF1. Expressed at high levels in heart and brain, and at lower levels in skeletal muscle, kidney, ovary, placenta, lung and liver. Highly up-regulated in colorectal cancer cell lines.

Its subcellular location is the nucleus. It localises to the cytoplasm. It carries out the reaction L-seryl-[protein] + ATP = O-phospho-L-seryl-[protein] + ADP + H(+). The catalysed reaction is L-threonyl-[protein] + ATP = O-phospho-L-threonyl-[protein] + ADP + H(+). With respect to regulation, activated by phosphorylation on Thr-211. Activated by phosphorylation at Ser-600 AKT1 during glucose starvation; the relevance of such activation in normal cells is however unsure. Functionally, serine/threonine-protein kinase involved in various processes such as cell adhesion, regulation of cell ploidy and senescence, cell proliferation and tumor progression. Phosphorylates ATM, CASP6, LATS1, PPP1R12A and p53/TP53. Acts as a regulator of cellular senescence and cellular ploidy by mediating phosphorylation of 'Ser-464' of LATS1, thereby controlling its stability. Controls cell adhesion by regulating activity of the myosin protein phosphatase 1 (PP1) complex. Acts by mediating phosphorylation of PPP1R12A subunit of myosin PP1: phosphorylated PPP1R12A then interacts with 14-3-3, leading to reduced dephosphorylation of myosin MLC2 by myosin PP1. May be involved in DNA damage response: phosphorylates p53/TP53 at 'Ser-15' and 'Ser-392' and is recruited to the CDKN1A/WAF1 promoter to participate in transcription activation by p53/TP53. May also act as a tumor malignancy-associated factor by promoting tumor invasion and metastasis under regulation and phosphorylation by AKT1. Suppresses Fas-induced apoptosis by mediating phosphorylation of CASP6, thereby suppressing the activation of the caspase and the subsequent cleavage of CFLAR. Regulates UV radiation-induced DNA damage response mediated by CDKN1A. In association with STK11, phosphorylates CDKN1A in response to UV radiation and contributes to its degradation which is necessary for optimal DNA repair. The chain is NUAK family SNF1-like kinase 1 (NUAK1) from Homo sapiens (Human).